The sequence spans 1437 residues: Myomesin-3 (1437 aa).

The interval 1-49 is disordered; it reads MTLPHSLGGAGDPRPPQAMEVHRLEHRQEEEQKEERQHSLRMGSSVRRR. The segment covering 20–38 has biased composition (basic and acidic residues); it reads EVHRLEHRQEEEQKEERQH. Positions 120–149 form a coiled coil; it reads RLLRQRRDWKTLRRRTEEKVQEAKELRELC. Ig-like C2-type domains lie at 154–246 and 269–361; these read PWFW…AKVL and PSVE…TYVL. 5 consecutive Fibronectin type-III domains span residues 375-469, 503-598, 604-696, 702-797, and 804-899; these read SPLN…VMGD, PPTN…LRGP, PPAQ…VKQA, APYG…CKEW, and PPYD…LEDK. Ig-like C2-type domains lie at 1120 to 1205 and 1334 to 1423; these read PYFE…LDLT and AKVV…VTIS.

In terms of assembly, homodimer.

It is found in the cytoplasm. Its subcellular location is the myofibril. The protein resides in the sarcomere. It localises to the m line. In terms of biological role, may link the intermediate filament cytoskeleton to the M-disk of the myofibrils in striated muscle. This is Myomesin-3 (MYOM3) from Homo sapiens (Human).